Here is a 573-residue protein sequence, read N- to C-terminus: Putative adenine deaminase PTO1085 (573 aa).

It belongs to the metallo-dependent hydrolases superfamily. Adenine deaminase family.

The enzyme catalyses adenine + H2O + H(+) = hypoxanthine + NH4(+). This chain is Putative adenine deaminase PTO1085, found in Picrophilus torridus (strain ATCC 700027 / DSM 9790 / JCM 10055 / NBRC 100828 / KAW 2/3).